The primary structure comprises 444 residues: Glutamate--tRNA ligase (444 aa).

The 'HIGH' region signature appears at 12–22 (PSPTGFLHVGG). The short motif at 213-217 (KMSKR) is the 'KMSKS' region element. Lys216 is an ATP binding site.

The protein belongs to the class-I aminoacyl-tRNA synthetase family. Glutamate--tRNA ligase type 1 subfamily. As to quaternary structure, monomer.

The protein resides in the cytoplasm. It carries out the reaction tRNA(Glu) + L-glutamate + ATP = L-glutamyl-tRNA(Glu) + AMP + diphosphate. In terms of biological role, catalyzes the attachment of glutamate to tRNA(Glu) in a two-step reaction: glutamate is first activated by ATP to form Glu-AMP and then transferred to the acceptor end of tRNA(Glu). The polypeptide is Glutamate--tRNA ligase (Methylacidiphilum infernorum (isolate V4) (Methylokorus infernorum (strain V4))).